A 122-amino-acid chain; its full sequence is Beta-2-microglobulin (122 aa).

Residues M1–A23 form the signal peptide. The Ig-like C1-type domain maps to P28–T117. C48 and C103 are joined by a disulfide.

Belongs to the beta-2-microglobulin family. As to quaternary structure, heterodimer of an alpha chain and a beta chain. Beta-2-microglobulin is the beta-chain of major histocompatibility complex class I molecules.

It is found in the secreted. Component of the class I major histocompatibility complex (MHC). Involved in the presentation of peptide antigens to the immune system. The protein is Beta-2-microglobulin (b2m) of Acipenser baerii (Siberian sturgeon).